Here is a 148-residue protein sequence, read N- to C-terminus: Iron/alpha-ketoglutarate-dependent dioxygenase ausU (148 aa).

Fe cation-binding residues include histidine 45 and aspartate 47.

The protein belongs to the PhyH family. Homodimer. Fe cation serves as cofactor.

It participates in secondary metabolite biosynthesis; terpenoid biosynthesis. Iron/alpha-ketoglutarate-dependent dioxygenase; part of the gene cluster B that mediates the biosynthesis of austinol and dehydroaustinol, two fungal meroterpenoids. The first step of the pathway is the synthesis of 3,5-dimethylorsellinic acid by the polyketide synthase ausA. 3,5-dimethylorsellinic acid is then prenylated by the polyprenyl transferase ausN. Further epoxidation by the FAD-dependent monooxygenase ausM and cyclization by the probable terpene cyclase ausL lead to the formation of protoaustinoid A. Protoaustinoid A is then oxidized to spiro-lactone preaustinoid A3 by the combined action of the FAD-binding monooxygenases ausB and ausC, and the dioxygenase ausE. Acid-catalyzed keto-rearrangement and ring contraction of the tetraketide portion of preaustinoid A3 by ausJ lead to the formation of preaustinoid A4. The aldo-keto reductase ausK, with the help of ausH, is involved in the next step by transforming preaustinoid A4 into isoaustinone which is in turn hydroxylated by the P450 monooxygenase ausI to form austinolide. Finally, the cytochrome P450 monooxygenase ausG modifies austinolide to austinol. Austinol can be further modified to dehydroaustinol which forms a diffusible complex with diorcinol that initiates conidiation. Due to genetic rearrangements of the clusters and the subsequent loss of some enzymes, the end products of the Emericella nidulans austinoid biosynthesis clusters are austinol and dehydroaustinol, even if additional enzymes, such as the O-acetyltransferase ausQ and the cytochrome P450 monooxygenase ausR are still functional. In Emericella nidulans (strain FGSC A4 / ATCC 38163 / CBS 112.46 / NRRL 194 / M139) (Aspergillus nidulans), this protein is Iron/alpha-ketoglutarate-dependent dioxygenase ausU.